The sequence spans 754 residues: Zinc finger protein with KRAB and SCAN domains 7 (754 aa).

Residue lysine 28 forms a Glycyl lysine isopeptide (Lys-Gly) (interchain with G-Cter in SUMO2) linkage. The SCAN box domain occupies 54–136 (RLHFRQLCYH…AVVEDFQRHL (83 aa)). The interval 157 to 215 (TALGTTKESPPTSPLSGGSAPGAHLEPPYDPGTHHLPSGDFAQCTSPVPTLPQVGNSGD) is disordered. Polar residues-rich tracts occupy residues 158 to 172 (ALGT…SPLS) and 199 to 215 (QCTS…NSGD). The region spanning 231-306 (VAYEDLSVDY…TSGGLFGVVP (76 aa)) is the KRAB domain. 10 consecutive C2H2-type zinc fingers follow at residues 383–405 (YRCD…QRIH), 411–433 (YECN…LRTH), 439–461 (YECS…QRLH), 467–489 (YKCN…QRTH), 495–517 (YECN…QVLH), 523–545 (YKCN…QRIH), 551–573 (YECS…QSLH), 579–601 (YKCS…ERIH), 607–629 (FECS…QRLH), and 635–657 (YKCN…QRIH). The C2H2-type 11; degenerate zinc finger occupies 663-685 (YECNECGKVFSYSSSLMVHQRTH). 2 C2H2-type zinc fingers span residues 691–713 (YKCN…QRVH) and 719–741 (YECS…QRTH). Positions 735–754 (NHHQRTHTGEKSSGLAWSVS) are disordered.

This sequence belongs to the krueppel C2H2-type zinc-finger protein family.

Its subcellular location is the nucleus. In terms of biological role, may be involved in transcriptional regulation. This Homo sapiens (Human) protein is Zinc finger protein with KRAB and SCAN domains 7 (ZKSCAN7).